Here is a 473-residue protein sequence, read N- to C-terminus: Glutamyl-tRNA reductase (473 aa).

Substrate contacts are provided by residues 49-52, Ser-109, 114-116, and Gln-120; these read TCNR and EQQ. The active-site Nucleophile is Cys-50. 189–194 is a binding site for NADP(+); that stretch reads GAGSMG. Positions 445-473 are disordered; the sequence is SGLDAGSGPQGADGPSAGPTPSAPNPSAE.

Belongs to the glutamyl-tRNA reductase family. In terms of assembly, homodimer.

The catalysed reaction is (S)-4-amino-5-oxopentanoate + tRNA(Glu) + NADP(+) = L-glutamyl-tRNA(Glu) + NADPH + H(+). Its pathway is porphyrin-containing compound metabolism; protoporphyrin-IX biosynthesis; 5-aminolevulinate from L-glutamyl-tRNA(Glu): step 1/2. Catalyzes the NADPH-dependent reduction of glutamyl-tRNA(Glu) to glutamate 1-semialdehyde (GSA). The chain is Glutamyl-tRNA reductase from Mycobacterium ulcerans (strain Agy99).